An 87-amino-acid polypeptide reads, in one-letter code: Small ribosomal subunit protein bS20 (87 aa).

Positions 1–27 (MANIKSAKKRAVQSEKRRKHNASRRSM) are disordered.

It belongs to the bacterial ribosomal protein bS20 family.

Its function is as follows. Binds directly to 16S ribosomal RNA. The protein is Small ribosomal subunit protein bS20 of Pectobacterium carotovorum subsp. carotovorum (strain PC1).